We begin with the raw amino-acid sequence, 317 residues long: Carbonic anhydrase 5B, mitochondrial (317 aa).

The transit peptide at 1 to 33 (MTVMSHLRVSLQVSSCTLLWRRFRVPRLVPLRS) directs the protein to the mitochondrion. The Alpha-carbonic anhydrase domain maps to 37-296 (YTCTYRTRNR…LMNRTVRSSF (260 aa)). 3 residues coordinate Zn(2+): H130, H132, and H155. 235-236 (TT) contacts substrate.

It belongs to the alpha-carbonic anhydrase family. The cofactor is Zn(2+).

The protein localises to the mitochondrion. The enzyme catalyses hydrogencarbonate + H(+) = CO2 + H2O. In terms of biological role, mitochondrial carbonic anhydrase that catalyzes the reversible conversion of carbon dioxide to bicarbonate/HCO3. This chain is Carbonic anhydrase 5B, mitochondrial (Ca5b), found in Rattus norvegicus (Rat).